We begin with the raw amino-acid sequence, 215 residues long: uncharacterized protein (215 aa).

6 consecutive transmembrane segments (helical) span residues L3–I23, A30–W50, L59–W79, W87–V107, V122–Y142, and V156–V176.

Belongs to the major facilitator superfamily. Allantoate permease family.

Its subcellular location is the membrane. This is an uncharacterized protein from Saccharomyces cerevisiae (strain ATCC 204508 / S288c) (Baker's yeast).